The primary structure comprises 79 residues: Cytochrome b (79 aa).

Transmembrane regions (helical) follow at residues 1–7, 31–52, and 67–79; these read TAMFLAM, WLIR…YLHI, and WNVG…LTMM. Residues His-37 and His-51 each coordinate heme b.

It belongs to the cytochrome b family. In terms of assembly, the cytochrome bc1 complex contains 3 respiratory subunits (MT-CYB, CYC1 and UQCRFS1), 2 core proteins (UQCRC1 and UQCRC2) and probably 6 low-molecular weight proteins. Heme b is required as a cofactor.

The protein resides in the mitochondrion inner membrane. Its function is as follows. Component of the ubiquinol-cytochrome c reductase complex (complex III or cytochrome b-c1 complex) that is part of the mitochondrial respiratory chain. The b-c1 complex mediates electron transfer from ubiquinol to cytochrome c. Contributes to the generation of a proton gradient across the mitochondrial membrane that is then used for ATP synthesis. The chain is Cytochrome b (mt-cyb) from Hypsophrys nicaraguensis (Moga).